A 254-amino-acid chain; its full sequence is MGQKVNPIGFRLGVVKGWESNWYGGKTFADKLVEDEQIRKYVLARIPKGGISKIVIERTIKRVTLTINTARPGVVIGKGGAEVDKIKEELKKITGKDVQINIFEIKRPEMEALLVGESIAQQLKARISYRRAMKQAIAGTMRVGALGIKIKLSGRLGGAEMARTDQYKEGRIPLHTLRADIDYAVSEALTVYGKIGIKVWIFKGEVYGKRDLSPNVGNAASGASSSSNNDNASPNQGGPRRKRGGEGNRKKSNK.

The 69-residue stretch at 38 to 106 folds into the KH type-2 domain; the sequence is IRKYVLARIP…DVQINIFEIK (69 aa). The span at 215 to 238 shows a compositional bias: low complexity; the sequence is NVGNAASGASSSSNNDNASPNQGG. The disordered stretch occupies residues 215–254; it reads NVGNAASGASSSSNNDNASPNQGGPRRKRGGEGNRKKSNK. A compositionally biased stretch (basic and acidic residues) spans 244–254; sequence GGEGNRKKSNK.

The protein belongs to the universal ribosomal protein uS3 family. As to quaternary structure, part of the 30S ribosomal subunit. Forms a tight complex with proteins S10 and S14.

Functionally, binds the lower part of the 30S subunit head. Binds mRNA in the 70S ribosome, positioning it for translation. The polypeptide is Small ribosomal subunit protein uS3 (Cytophaga hutchinsonii (strain ATCC 33406 / DSM 1761 / CIP 103989 / NBRC 15051 / NCIMB 9469 / D465)).